The sequence spans 927 residues: LPS-assembly protein LptD (927 aa).

The first 22 residues, 1–22 (MALKSPAFRKKFPLLVTGSLLA), serve as a signal peptide directing secretion. The disordered stretch occupies residues 60-100 (LPPRPVHSTASVSSNGTVTSESSSSGEQVAGPQLVTEAKGK). The span at 70-86 (SVSSNGTVTSESSSSGE) shows a compositional bias: low complexity.

Belongs to the LptD family. Component of the lipopolysaccharide transport and assembly complex. Interacts with LptE and LptA.

The protein resides in the cell outer membrane. Together with LptE, is involved in the assembly of lipopolysaccharide (LPS) at the surface of the outer membrane. The polypeptide is LPS-assembly protein LptD (Pseudomonas syringae pv. tomato (strain ATCC BAA-871 / DC3000)).